The chain runs to 339 residues: Uroporphyrinogen decarboxylase (339 aa).

Residues 21–25 (RQAGR), Asp-71, Tyr-147, Ser-202, and His-315 each bind substrate.

It belongs to the uroporphyrinogen decarboxylase family. Homodimer.

It is found in the cytoplasm. The catalysed reaction is uroporphyrinogen III + 4 H(+) = coproporphyrinogen III + 4 CO2. The protein operates within porphyrin-containing compound metabolism; protoporphyrin-IX biosynthesis; coproporphyrinogen-III from 5-aminolevulinate: step 4/4. Functionally, catalyzes the decarboxylation of four acetate groups of uroporphyrinogen-III to yield coproporphyrinogen-III. This Helicobacter pylori (strain Shi470) protein is Uroporphyrinogen decarboxylase.